A 231-amino-acid polypeptide reads, in one-letter code: Large ribosomal subunit protein uL1 (231 aa).

Belongs to the universal ribosomal protein uL1 family. As to quaternary structure, part of the 50S ribosomal subunit.

Its function is as follows. Binds directly to 23S rRNA. The L1 stalk is quite mobile in the ribosome, and is involved in E site tRNA release. Protein L1 is also a translational repressor protein, it controls the translation of the L11 operon by binding to its mRNA. This Moorella thermoacetica (strain ATCC 39073 / JCM 9320) protein is Large ribosomal subunit protein uL1.